Here is a 151-residue protein sequence, read N- to C-terminus: Lipoprotein signal peptidase (151 aa).

A run of 2 helical transmembrane segments spans residues 54–74 and 83–103; these read GQMWFFYVVTTIIVGVIIYLI and LLKIALGLVLGGAIGNFIDRL. Catalysis depends on residues aspartate 110 and aspartate 125. A helical transmembrane segment spans residues 120 to 140; the sequence is IFNIADSALTIGVGLFLLNIL.

It belongs to the peptidase A8 family.

Its subcellular location is the cell membrane. The enzyme catalyses Release of signal peptides from bacterial membrane prolipoproteins. Hydrolyzes -Xaa-Yaa-Zaa-|-(S,diacylglyceryl)Cys-, in which Xaa is hydrophobic (preferably Leu), and Yaa (Ala or Ser) and Zaa (Gly or Ala) have small, neutral side chains.. It participates in protein modification; lipoprotein biosynthesis (signal peptide cleavage). Functionally, this protein specifically catalyzes the removal of signal peptides from prolipoproteins. This Shouchella clausii (strain KSM-K16) (Alkalihalobacillus clausii) protein is Lipoprotein signal peptidase.